Consider the following 716-residue polypeptide: Polyribonucleotide nucleotidyltransferase (716 aa).

Positions 495 and 501 each coordinate Mg(2+). The 60-residue stretch at 562–621 (PRLFRIQINPEQIGLVIGPGGKTIRSITEQTGAKIDIEDTGAVTISAVDADSALRAKSII) folds into the KH domain. The S1 motif domain maps to 631-699 (GDVYIGKVTR…QKGRVNLTRK (69 aa)).

Belongs to the polyribonucleotide nucleotidyltransferase family. It depends on Mg(2+) as a cofactor.

It is found in the cytoplasm. The enzyme catalyses RNA(n+1) + phosphate = RNA(n) + a ribonucleoside 5'-diphosphate. In terms of biological role, involved in mRNA degradation. Catalyzes the phosphorolysis of single-stranded polyribonucleotides processively in the 3'- to 5'-direction. The protein is Polyribonucleotide nucleotidyltransferase of Synechococcus sp. (strain ATCC 27144 / PCC 6301 / SAUG 1402/1) (Anacystis nidulans).